The chain runs to 429 residues: MATLIKNGNLYQAGRIYQADVLIEDGKIKAIGKNLSDVVKENLVEIDATNKLVAPGLVDVHVHYRDPGFTYKETIHTGSLAAAHGGYTTVCAMPNLDPVPDTPELVEKMCSRNQEDGVVKVKQYGSITHGLKSEELVDFVGMKKAGAFAFSNDGSGVQTAGTMYQAMKSAAALNMAIVAHVEDNSLLFGGVMNAGKRADELGLPGILGISESSQIARDLLLAKETGVHYHVCHVSTKESVELVRLAKQHKINVTCEVSPHHLLLADVDIPGNDPYYKMNPPLRGVEDRQALIDSLLDGTIDMIATDHAPHSIDEKTGDMREASFGITGSETAFAMLYTKFVKTGIFTLEQLLQWMSINPAEKFGMEDAGELLPGKSADLAIFDLNKEYVIKEEDYLSKGINTPFTGEKVYGQTVLTMVDGQKVYQREEK.

Residues His61 and His63 each coordinate Zn(2+). Substrate is bound by residues 63 to 65 (HYR) and Asn95. Residues Asp153, His180, and His233 each contribute to the Zn(2+) site. Asn279 provides a ligand contact to substrate. A Zn(2+)-binding site is contributed by Asp306. The active site involves Asp306. Substrate is bound by residues His310 and 324 to 325 (FG).

It belongs to the metallo-dependent hydrolases superfamily. DHOase family. Class I DHOase subfamily. The cofactor is Zn(2+).

It catalyses the reaction (S)-dihydroorotate + H2O = N-carbamoyl-L-aspartate + H(+). It functions in the pathway pyrimidine metabolism; UMP biosynthesis via de novo pathway; (S)-dihydroorotate from bicarbonate: step 3/3. In terms of biological role, catalyzes the reversible cyclization of carbamoyl aspartate to dihydroorotate. The protein is Dihydroorotase of Ligilactobacillus salivarius (strain UCC118) (Lactobacillus salivarius).